The primary structure comprises 210 residues: Orotate phosphoribosyltransferase (210 aa).

Residues Arg94, Lys98, His100, and 120 to 128 each bind 5-phospho-alpha-D-ribose 1-diphosphate; that span reads EDLISTGGS. Ser124 contributes to the orotate binding site.

It belongs to the purine/pyrimidine phosphoribosyltransferase family. PyrE subfamily. As to quaternary structure, homodimer. Mg(2+) is required as a cofactor.

It carries out the reaction orotidine 5'-phosphate + diphosphate = orotate + 5-phospho-alpha-D-ribose 1-diphosphate. Its pathway is pyrimidine metabolism; UMP biosynthesis via de novo pathway; UMP from orotate: step 1/2. Its function is as follows. Catalyzes the transfer of a ribosyl phosphate group from 5-phosphoribose 1-diphosphate to orotate, leading to the formation of orotidine monophosphate (OMP). The protein is Orotate phosphoribosyltransferase of Bacillus cereus (strain B4264).